The primary structure comprises 216 residues: Adenylate kinase (216 aa).

10–15 serves as a coordination point for ATP; the sequence is GAGKGT. Positions 30 to 59 are NMP; sequence STGDIFRANIKEKTPLGIEAKRYIDNGQLV. Residues Thr-31, Arg-36, 57 to 59, 85 to 88, and Gln-92 each bind AMP; these read QLV and GFPR. Positions 126–163 are LID; it reads GRRVCTSCGASYHIRFNPPKIEGKCDICDNELIQRKDD. Arg-127 contributes to the ATP binding site. Positions 130 and 133 each coordinate Zn(2+). Residue 136 to 137 coordinates ATP; it reads SY. Cys-150 and Cys-153 together coordinate Zn(2+). Positions 160 and 171 each coordinate AMP. Glu-199 contacts ATP.

The protein belongs to the adenylate kinase family. As to quaternary structure, monomer.

It is found in the cytoplasm. The catalysed reaction is AMP + ATP = 2 ADP. The protein operates within purine metabolism; AMP biosynthesis via salvage pathway; AMP from ADP: step 1/1. Catalyzes the reversible transfer of the terminal phosphate group between ATP and AMP. Plays an important role in cellular energy homeostasis and in adenine nucleotide metabolism. The protein is Adenylate kinase of Clostridium botulinum (strain Langeland / NCTC 10281 / Type F).